A 320-amino-acid polypeptide reads, in one-letter code: Ribosomal RNA large subunit methyltransferase F (320 aa).

The interval 1–20 (MHKSANSKTRKQSKGLHPRN) is disordered.

It belongs to the methyltransferase superfamily. METTL16/RlmF family.

It is found in the cytoplasm. The catalysed reaction is adenosine(1618) in 23S rRNA + S-adenosyl-L-methionine = N(6)-methyladenosine(1618) in 23S rRNA + S-adenosyl-L-homocysteine + H(+). In terms of biological role, specifically methylates the adenine in position 1618 of 23S rRNA. This is Ribosomal RNA large subunit methyltransferase F from Saccharophagus degradans (strain 2-40 / ATCC 43961 / DSM 17024).